Consider the following 40-residue polypeptide: U12-ctenitoxin-Co1a (40 aa).

Intrachain disulfides connect Cys2-Cys16, Cys9-Cys22, Cys15-Cys31, and Cys24-Cys29.

As to expression, expressed by the venom gland.

The protein resides in the secreted. Insecticidal neurotoxin that reversibly inhibits the N-methyl-D-aspartate (NMDA)-subtype of ionotropic glutamate receptor (GRIN) and inhibits inactivation of insect sodium channels (Nav). In vivo, is highly toxic to insects. In Ctenus ornatus (Brazilian spider), this protein is U12-ctenitoxin-Co1a.